Consider the following 510-residue polypeptide: Zinc metalloproteinase (510 aa).

The N-terminal stretch at 1-24 is a signal peptide; it reads MKSKLICIIMVIAFQAHFTMTVKA. Positions 25–200 are excised as a propeptide; it reads DSVGEEKLQN…ILKKQNMLSE (176 aa). Residue H349 coordinates Zn(2+). Residue E350 is part of the active site. Residues H353 and E373 each coordinate Zn(2+). H437 (proton donor) is an active-site residue.

Belongs to the peptidase M4 family. Requires Zn(2+) as cofactor.

The protein resides in the secreted. Probably linked to the pathogenesis of listerial infection. The protein is Zinc metalloproteinase (mpl) of Listeria monocytogenes serovar 1/2a (strain ATCC BAA-679 / EGD-e).